A 31-amino-acid polypeptide reads, in one-letter code: Cytochrome b6-f complex subunit 6 (31 aa).

A helical transmembrane segment spans residues isoleucine 3–phenylalanine 23.

It belongs to the PetL family. The 4 large subunits of the cytochrome b6-f complex are cytochrome b6, subunit IV (17 kDa polypeptide, PetD), cytochrome f and the Rieske protein, while the 4 small subunits are PetG, PetL, PetM and PetN. The complex functions as a dimer.

It localises to the plastid. The protein resides in the chloroplast thylakoid membrane. Functionally, component of the cytochrome b6-f complex, which mediates electron transfer between photosystem II (PSII) and photosystem I (PSI), cyclic electron flow around PSI, and state transitions. PetL is important for photoautotrophic growth as well as for electron transfer efficiency and stability of the cytochrome b6-f complex. The sequence is that of Cytochrome b6-f complex subunit 6 from Rhodomonas salina (Cryptomonas salina).